Consider the following 494-residue polypeptide: Maintenance of mitochondrial morphology protein 1 (494 aa).

Over 1–22 the chain is Lumenal; the sequence is MSSQPGDPATLPAQSSLSFTQG. A helical membrane pass occupies residues 23-43; the sequence is FLLGQLSVVLVLAAFIKFFIF. Residues 44–494 are Cytoplasmic-facing; it reads GEAPPPPSRG…GSLPEAVTPG (451 aa). Disordered stretches follow at residues 50-98, 274-330, 398-426, and 449-494; these read PSRG…SSST, PPLD…KSNV, VRTG…ARHE, and VASR…VTPG. Residues 54–64 are compositionally biased toward basic residues; sequence LSHRSATHRRS. Polar residues-rich tracts occupy residues 65 to 76 and 85 to 98; these read NSIYSNSPQEAG and STSN…SSST. The SMP-LTD domain maps to 130–387; sequence QPESLDWFNV…EPRVQVVGLP (258 aa). The segment covering 274–286 has biased composition (pro residues); it reads PPLDTPSHSPSPP. Polar residues-rich tracts occupy residues 406–416 and 466–477; these read TASNGPRSTVS and RSMTRQESSGDL.

Belongs to the MMM1 family. In terms of assembly, homodimer. Component of the ER-mitochondria encounter structure (ERMES) or MDM complex, composed of mmm1, mdm10, mdm12 and mdm34. A mmm1 homodimer associates with one molecule of mdm12 on each side in a pairwise head-to-tail manner, and the SMP-LTD domains of mmm1 and mdm12 generate a continuous hydrophobic tunnel for phospholipid trafficking.

Its subcellular location is the endoplasmic reticulum membrane. In terms of biological role, component of the ERMES/MDM complex, which serves as a molecular tether to connect the endoplasmic reticulum (ER) and mitochondria. Components of this complex are involved in the control of mitochondrial shape and protein biogenesis, and function in nonvesicular lipid trafficking between the ER and mitochondria. The mdm12-mmm1 subcomplex functions in the major beta-barrel assembly pathway that is responsible for biogenesis of all outer membrane beta-barrel proteins, and acts in a late step after the SAM complex. The mdm10-mdm12-mmm1 subcomplex further acts in the TOM40-specific pathway after the action of the mdm12-mmm1 complex. Essential for establishing and maintaining the structure of mitochondria and maintenance of mtDNA nucleoids. The chain is Maintenance of mitochondrial morphology protein 1 from Aspergillus clavatus (strain ATCC 1007 / CBS 513.65 / DSM 816 / NCTC 3887 / NRRL 1 / QM 1276 / 107).